The following is a 346-amino-acid chain: Phosphoribosylformylglycinamidine cyclo-ligase (346 aa).

This sequence belongs to the AIR synthase family.

It is found in the cytoplasm. It carries out the reaction 2-formamido-N(1)-(5-O-phospho-beta-D-ribosyl)acetamidine + ATP = 5-amino-1-(5-phospho-beta-D-ribosyl)imidazole + ADP + phosphate + H(+). It participates in purine metabolism; IMP biosynthesis via de novo pathway; 5-amino-1-(5-phospho-D-ribosyl)imidazole from N(2)-formyl-N(1)-(5-phospho-D-ribosyl)glycinamide: step 2/2. The polypeptide is Phosphoribosylformylglycinamidine cyclo-ligase (Bacillus thuringiensis subsp. konkukian (strain 97-27)).